The following is a 124-amino-acid chain: Protein MT1307 (124 aa).

Residues 1–35 constitute a signal peptide (tat-type signal); that stretch reads MTTMITLRRRFAVAVAGVATAAATTVTLAPAPANA.

To M.tuberculosis Rv1813c. In terms of processing, predicted to be exported by the Tat system. The position of the signal peptide cleavage has not been experimentally proven.

The polypeptide is Protein MT1307 (Mycobacterium tuberculosis (strain CDC 1551 / Oshkosh)).